A 162-amino-acid polypeptide reads, in one-letter code: MTEEIAGFQTSPKAQVQAAFEEIARRSMHDLSFLHPSMPVYVSDFTLFEGQWTGCVITPWMLSAVIFPGPDQLWPLRKVSEKIGLQLPYGTMTFTVGELDGVSQYLSCSLMSPLSHSMSIEEGQRLTDDCARMILSLPVTNPDVPHAGRRALLFGRRSGENA.

Belongs to the HupJ family.

In Escherichia coli O6:H1 (strain CFT073 / ATCC 700928 / UPEC), this protein is Hydrogenase-2 operon protein HybE (hybE).